The chain runs to 778 residues: uncharacterized protein (778 aa).

In terms of domain architecture, PE spans 1–92; the sequence is MSFVIAVPEA…GARSYVVAEA (92 aa). Disordered stretches follow at residues 125–163, 372–510, and 718–778; these read ADGT…AGLI, TGLA…GDAF, and QGGL…GADG. Gly residues-rich tracts occupy residues 402 to 429, 436 to 510, and 718 to 763; these read NQTG…GGLG, DGTG…GDAF, and QGGL…GSSG.

Belongs to the mycobacterial PE family. PGRS subfamily.

This is an uncharacterized protein from Mycobacterium tuberculosis (strain CDC 1551 / Oshkosh).